Consider the following 104-residue polypeptide: Small ribosomal subunit protein uS10 (104 aa).

This sequence belongs to the universal ribosomal protein uS10 family. As to quaternary structure, part of the 30S ribosomal subunit.

Its function is as follows. Involved in the binding of tRNA to the ribosomes. The chain is Small ribosomal subunit protein uS10 from Ruegeria pomeroyi (strain ATCC 700808 / DSM 15171 / DSS-3) (Silicibacter pomeroyi).